The primary structure comprises 252 residues: Uracil-DNA glycosylase (252 aa).

Aspartate 87 acts as the Proton acceptor in catalysis.

This sequence belongs to the uracil-DNA glycosylase (UDG) superfamily. UNG family.

The protein localises to the host nucleus. It catalyses the reaction Hydrolyzes single-stranded DNA or mismatched double-stranded DNA and polynucleotides, releasing free uracil.. Functionally, excises uracil residues from the DNA which can arise as a result of misincorporation of dUMP residues by DNA polymerase or deamination of cytosines. Therefore may reduce deleterious uracil incorporation into the viral genome, particularly in terminally differentiated cells which lack DNA repair enzymes. This chain is Uracil-DNA glycosylase (46), found in Saimiri sciureus (Common squirrel monkey).